Consider the following 85-residue polypeptide: Sugar transporter SemiSWEET (85 aa).

In terms of domain architecture, PQ-loop spans 2 to 59 (ENLIGYVAAFLTTVSFLPQVLRVVMTKQTRDISRNMYIMFFLGVVLWFVYGILRSDLP). 3 helical membrane passes run 5-25 (IGYV…LRVV), 33-53 (ISRN…VYGI), and 57-77 (DLPI…ILYY).

In terms of assembly, homodimer.

Its subcellular location is the cell membrane. Its function is as follows. The homodimer mediates transmembrane sugar transport down a concentration gradient. Transport is probably effected by rocking-type movements, where a cargo-binding cavity opens first on one and then on the other side of the membrane. This Leptospira biflexa serovar Patoc (strain Patoc 1 / ATCC 23582 / Paris) protein is Sugar transporter SemiSWEET.